A 209-amino-acid polypeptide reads, in one-letter code: Ribonuclease HII (209 aa).

Residues 19–209 form the RNase H type-2 domain; it reads CTIVGVDEVG…ASGITKLYNK (191 aa). A divalent metal cation-binding residues include Asp-25, Glu-26, and Asp-118.

This sequence belongs to the RNase HII family. The cofactor is Mn(2+). Mg(2+) serves as cofactor.

The protein resides in the cytoplasm. It carries out the reaction Endonucleolytic cleavage to 5'-phosphomonoester.. Functionally, endonuclease that specifically degrades the RNA of RNA-DNA hybrids. This Ehrlichia chaffeensis (strain ATCC CRL-10679 / Arkansas) protein is Ribonuclease HII.